A 323-amino-acid chain; its full sequence is Serine racemase (323 aa).

Positions 32, 33, and 52 each coordinate ATP. Lys-57 functions as the Proton acceptor in the catalytic mechanism. Lysino-D-alanine (Lys); alternate is present on Lys-57. N6-(pyridoxal phosphate)lysine; alternate is present on Lys-57. Thr-79 lines the Ca(2+) pocket. Ser-82 serves as the catalytic Proton acceptor. Pyridoxal 5'-phosphate is bound at residue Asn-84. 2 residues coordinate ATP: Gln-87 and Tyr-119. Asp-176 is a Mg(2+) binding site. Residues Gly-183, Gly-184, Gly-185, Gly-186, and Leu-187 each coordinate pyridoxal 5'-phosphate. Glu-208, Gly-212, and Asp-214 together coordinate Ca(2+). Mg(2+)-binding residues include Glu-208, Gly-212, and Asp-214. Glu-208, Gly-212, and Asp-214 together coordinate Mn(2+). An ATP-binding site is contributed by Lys-277. Ser-308 provides a ligand contact to pyridoxal 5'-phosphate. Residue Asn-311 coordinates ATP.

The protein belongs to the serine/threonine dehydratase family. As to quaternary structure, homodimer. Requires Mg(2+) as cofactor. The cofactor is Mn(2+). It depends on Ca(2+) as a cofactor. Pyridoxal 5'-phosphate serves as cofactor. Post-translationally, modification of the active site Lys by its substrate Ser to lysino-D-alanine reduces but does not abolish enzyme activity.

It carries out the reaction L-serine = D-serine. The enzyme catalyses L-serine = pyruvate + NH4(+). It catalyses the reaction D-serine = pyruvate + NH4(+). Allosterically activated by ATP, by magnesium, and possibly also by other divalent metal cations. Catalyzes the synthesis of D-serine from L-serine. Has dehydratase activity towards both L-serine and D-serine. The protein is Serine racemase of Schizosaccharomyces pombe (strain 972 / ATCC 24843) (Fission yeast).